The chain runs to 350 residues: Flap endonuclease 1 (350 aa).

An N-domain region spans residues 1-101; that stretch reads MGVNLRELIP…REVEERLRRK (101 aa). Residues aspartate 30, aspartate 83, glutamate 155, glutamate 157, aspartate 176, aspartate 178, and aspartate 239 each coordinate Mg(2+). The tract at residues 119–261 is I-domain; sequence EARKYAMMAA…TALRLVKSLG (143 aa). The interaction with PCNA stretch occupies residues 341–349; sequence RQSRLDMWF.

This sequence belongs to the XPG/RAD2 endonuclease family. FEN1 subfamily. As to quaternary structure, interacts with PCNA. PCNA stimulates the nuclease activity without altering cleavage specificity. Mg(2+) is required as a cofactor.

In terms of biological role, structure-specific nuclease with 5'-flap endonuclease and 5'-3' exonuclease activities involved in DNA replication and repair. During DNA replication, cleaves the 5'-overhanging flap structure that is generated by displacement synthesis when DNA polymerase encounters the 5'-end of a downstream Okazaki fragment. Binds the unpaired 3'-DNA end and kinks the DNA to facilitate 5' cleavage specificity. Cleaves one nucleotide into the double-stranded DNA from the junction in flap DNA, leaving a nick for ligation. Also involved in the base excision repair (BER) pathway. Acts as a genome stabilization factor that prevents flaps from equilibrating into structures that lead to duplications and deletions. Also possesses 5'-3' exonuclease activity on nicked or gapped double-stranded DNA. The protein is Flap endonuclease 1 of Aeropyrum pernix (strain ATCC 700893 / DSM 11879 / JCM 9820 / NBRC 100138 / K1).